Reading from the N-terminus, the 122-residue chain is Large ribosomal subunit protein uL14 (122 aa).

The protein belongs to the universal ribosomal protein uL14 family. In terms of assembly, part of the 50S ribosomal subunit. Forms a cluster with proteins L3 and L19. In the 70S ribosome, L14 and L19 interact and together make contacts with the 16S rRNA in bridges B5 and B8.

Its function is as follows. Binds to 23S rRNA. Forms part of two intersubunit bridges in the 70S ribosome. This is Large ribosomal subunit protein uL14 from Streptomyces avermitilis (strain ATCC 31267 / DSM 46492 / JCM 5070 / NBRC 14893 / NCIMB 12804 / NRRL 8165 / MA-4680).